A 101-amino-acid polypeptide reads, in one-letter code: Thioredoxin 1 (101 aa).

One can recognise a Thioredoxin domain in the interval 2–101 (AQTLDDLIRT…MRQEVLKAIG (100 aa)). Cys-25 and Cys-28 are disulfide-bonded.

This sequence belongs to the thioredoxin family.

Participates in various redox reactions through the reversible oxidation of its active center dithiol to a disulfide and catalyzes dithiol-disulfide exchange reactions. The sequence is that of Thioredoxin 1 (trx1) from Chlorobaculum tepidum (strain ATCC 49652 / DSM 12025 / NBRC 103806 / TLS) (Chlorobium tepidum).